The sequence spans 280 residues: Probable cell division protein WhiA (280 aa).

Residues 247-279 (SLEQIANFFFTKYNIKISRSGIQHFSVNLKKLC) constitute a DNA-binding region (H-T-H motif).

This sequence belongs to the WhiA family.

In terms of biological role, involved in cell division and chromosome segregation. The protein is Probable cell division protein WhiA of Mycoplasma genitalium (strain ATCC 33530 / DSM 19775 / NCTC 10195 / G37) (Mycoplasmoides genitalium).